The sequence spans 1738 residues: MRLLWGLAWVFSFCASSLQKPRLLLFSPSVVNLGTPLSVGVQLLDAPPGQEVKGSVFLRNPKGGSCSPKKDFKLSSGDDFVLLSLEVPLEDVRSCGLFDLRRAPHIQLVAQSPWLRNTAFKATETQGVNLLFSSRRGHIFVQTDQPIYNPGQRVRYRVFALDQKMRPSTDFLTITVENSHGLRVLKKEIFTSTSIFQDAFTIPDISEPGTWKISARFSDGLESNRSTHFEVKKYVLPNFEVKITPWKPYILMVPSNSDEIQLDIQARYIYGKPVQGVAYTRFALMDEQGKRTFLRGLETQAKLVEGRTHISISKDQFQAALDKINIGVRDLEGLRLYAATAVIESPGGEMEEAELTSWRFVSSAFSLDLSRTKRHLVPGAHFLLQALVQEMSGSEASNVPVKVSATLVSGSDSQVLDIQQSTNGIGQVSISFPIPPTVTELRLLVSAGSLYPAIARLTVQAPPSRGTGFLSIEPLDPRSPSVGDTFILNLQPVGIPAPTFSHYYYMIISRGQIMAMGREPRKTVTSVSVLVDHQLAPSFYFVAYFYHQGHPVANSLLINIQSRDCEGKLQLKVDGAKEYRNADMMKLRIQTDSKALVALGAVDMALYAVGGRSHKPLDMSKVFEVINSYNVGCGPGGGDDALQVFQDAGLAFSDGDRLTQTREDLSCPKEKKSRQKRNVNFQKAVSEKLGQYSSPDAKRCCQDGMTKLPMKRTCEQRAARVPQQACREPFLSCCKFAEDLRRNQTRSQAHLARNNHNMLQEEDLIDEDDILVRTSFPENWLWRVEPVDSSKLLTVWLPDSMTTWEIHGVSLSKSKGLCVAKPTRVRVFRKFHLHLRLPISIRRFEQFELRPVLYNYLNDDVAVSVHVTPVEGLCLAGGGMMAQQVTVPAGSARPVAFSVVPTAAANVPLKVVARGVFDLGDAVSKILQIEKEGAIHREELVYNLDPLNNLGRTLEIPGSSDPNIVPDGDFSSLVRVTASEPLETMGSEGALSPGGVASLLRLPQGCAEQTMIYLAPTLTASNYLDRTEQWSKLSPETKDHAVDLIQKGYMRIQQFRKNDGSFGAWLHRDSSTWLTAFVLKILSLAQEQVGNSPEKLQETASWLLAQQLGDGSFHDPCPVIHRAMQGGLVGSDETVALTAFVVIALHHGLDVFQDDDAKQLKNRVEASITKANSFLGQKASAGLLGAHAAAITAYALTLTKASEDLRNVAHNSLMAMAEETGEHLYWGLVLGSQDKVVLRPTAPRSPTEPVPQAPALWIETTAYALLHLLLREGKGKMADKAASWLTHQGSFHGAFRSTQDTVVTLDALSAYWIASHTTEEKALNVTLSSMGRNGLKTHGLHLNNHQVKGLEEELKFSLGSTISVKVEGNSKGTLKILRTYNVLDMKNTTCQDLQIEVKVTGAVEYAWDANEDYEDYYDMPAADDPSVPLQPVTPLQLFEGRRSRRRREAPKVVEEQESRVQYTVCIWRNGKLGLSGMAIADITLLSGFHALRADLEKLTSLSDRYVSHFETDGPHVLLYFDSVPTTRECVGFGASQEVVVGLVQPSSAVLYDYYSPDHKCSVFYAAPTKSQLLATLCSGDVCQCAEGKCPRLLRSLERRVEDKDGYRMRFACYYPRVEYGFTVKVLREDGRAAFRLFESKITQVLHFRKDTMASIGQTRNFLSRASCRLRLEPNKEYLIMGMDGETSDNKGDPQYLLDSNTWIEEMPSEQMCKSTRHRAACFQLKDFLMEFSSRGCQV.

The signal sequence occupies residues 1 to 19; it reads MRLLWGLAWVFSFCASSLQ. Residues C66 and C95 are joined by a disulfide bond. N-linked (GlcNAc...) asparagine glycosylation is present at N224. Cysteines 633 and 667 form a disulfide. A propeptide spanning residues 674–677 is cleaved from the precursor; it reads RQKR. Disulfide bonds link C700–C726, C701–C733, and C714–C734. The region spanning 700–734 is the Anaphylatoxin-like domain; the sequence is CCQDGMTKLPMKRTCEQRAARVPQQACREPFLSCC. Residue N743 is glycosylated (N-linked (GlcNAc...) asparagine). A cross-link (isoglutamyl cysteine thioester (Cys-Gln)) is located at residues 1006–1009; the sequence is CAEQ. 2 N-linked (GlcNAc...) asparagine glycosylation sites follow: N1324 and N1387. Sulfotyrosine occurs at positions 1413, 1416, and 1417. Positions 1444–1447 are excised as a propeptide; sequence RRRR. Intrachain disulfides connect C1465-C1529, C1577-C1582, C1589-C1667, C1612-C1736, and C1712-C1721. An NTR domain is found at 1589–1736; it reads CPRLLRSLER…FLMEFSSRGC (148 aa).

In terms of assembly, in absence of complement activation, circulates in blood as a disulfide-linked trimer of an alpha, beta and gamma chain. Complement C4b is composed of complement C4b-A, complement C4 beta and complement C4 gamma chains that are associated via disulfide bonds. Non-enzymatic component of the C3 convertase, also named C4bC2b, composed of the serine protease complement C2b (C2), as well as complement C4b. Non-enzymatic component of the C5 convertase, also named C4bC2bC3b, composed of the serine protease complement C2b (C2), complement C3b, as well as complement C4b. Post-translationally, prior to secretion, the single-chain precursor is enzymatically cleaved by plasminogen (PLG) to yield non-identical chains alpha, beta and gamma. During activation of the complement systems, the alpha chain is cleaved into C4a and C4b by different proteases depending on the complement pathway: C4b stays linked to the beta and gamma chains, while C4a is released in the plasma. The alpha chain is cleaved by C1S to generate C4a and C4b following activation by the classical complement system. The alpha chain is cleaved to generate C4a and C4b by MASP2 following activation by the lectin complement system. The alpha chain is cleaved by GZMK to generate C4a and C4b following activation by the GZMK complement system. Further degradation of C4b by C1 into the inactive fragments C4c and C4d blocks the generation of C3 convertase. The proteolytic cleavages often are incomplete so that many structural forms can be found in plasma. In terms of processing, upon activation, the internal thioester bond reacts with carbohydrate antigens on the target surface to form amide or ester bonds, leading to covalent association with the surface of pathogens. Complement C4b interacts with complement C3b via a thioester linkage.

The protein localises to the secreted. Its subcellular location is the cell surface. In terms of biological role, precursor of non-enzymatic components of the classical, lectin and GZMK complement pathways, which consist in a cascade of proteins that leads to phagocytosis and breakdown of pathogens and signaling that strengthens the adaptive immune system. Non-enzymatic component of C3 and C5 convertases. Generated following cleavage by complement proteases (C1S, MASP2 or GZMK, depending on the complement pathway), it covalently attaches to the surface of pathogens, where it acts as an opsonin that marks the surface of antigens for removal. It then recruits the serine protease complement C2b to form the C3 and C5 convertases, which cleave and activate C3 and C5, respectively, the next components of the complement pathways. Complement C4b-A isotype is responsible for effective binding to form amide bonds with immune aggregates or protein antigens, while complement C4b-B isotype catalyzes the transacylation of the thioester carbonyl group to form ester bonds with carbohydrate antigens. Functionally, putative humoral mediator released following cleavage by complement proteases (C1S, MASP2 or GZMK, depending on the complement pathway). While it is strongly similar to anaphylatoxins, its role is unclear. Was reported to act as a mediator of local inflammatory process; however these effects were probably due to contamination with C3a and/C5a anaphylatoxins in biological assays. This Mus musculus (Mouse) protein is Complement C4-B.